The primary structure comprises 1037 residues: Presequence protease, mitochondrial (1037 aa).

A mitochondrion-targeting transit peptide spans 1-28; sequence MWRCGGRQGLCVLRRLSGGHAHHRAWRW. Residue His104 coordinates Zn(2+). Glu107 serves as the catalytic Proton acceptor. His108 provides a ligand contact to Zn(2+). Cys119 and Cys556 form a disulfide bridge. Glu180 is an active-site residue. Glu205 is a Zn(2+) binding site. The residue at position 759 (Lys759) is an N6-acetyllysine. Residue Lys770 is modified to N6-acetyllysine; alternate. Lys770 carries the N6-succinyllysine; alternate modification. The span at 804–814 shows a compositional bias: basic residues; it reads GRSKKERRPVR. Positions 804 to 834 are disordered; it reads GRSKKERRPVRPHTVEKPVPSSSGGDAHVPH. Lys849 carries the N6-succinyllysine modification. Lys884 carries the post-translational modification N6-acetyllysine. Lys946 carries the N6-succinyllysine modification.

This sequence belongs to the peptidase M16 family. PreP subfamily. In terms of assembly, monomer and homodimer; homodimerization is induced by binding of the substrate. Zn(2+) is required as a cofactor. In terms of processing, a disulfide bond locks the enzyme in the closed conformation preventing substrate entry into the catalytic chamber. In terms of tissue distribution, widely expressed. Expressed at higher level in muscle and heart compared to brain, pancreas, liver, lung and placenta.

The protein resides in the mitochondrion. It localises to the mitochondrion matrix. With respect to regulation, mainly exists in a closed and catalytically competent conformation but a closed-to-open switch allows substrate entry into the catalytic chamber. Substrate binding induces closure and dimerization. A disulfide bond may lock the enzyme in a closed conformation preventing substrate entry into the catalytic chamber, participating in redox regulation of the enzyme. Inhibited by metal-chelating agents. Inhibited by nickel and zinc excess, and slightly activated by manganese. In terms of biological role, metalloendopeptidase of the mitochondrial matrix that functions in peptide cleavage and degradation rather than in protein processing. Has an ATP-independent activity. Specifically cleaves peptides in the range of 5 to 65 residues. Shows a preference for cleavage after small polar residues and before basic residues, but without any positional preference. Degrades the transit peptides of mitochondrial proteins after their cleavage. Also degrades other unstructured peptides. It is also able to degrade amyloid-beta protein 40, one of the peptides produced by APP processing, when it accumulates in mitochondrion. It is a highly efficient protease, at least toward amyloid-beta protein 40. Cleaves that peptide at a specific position and is probably not processive, releasing digested peptides intermediates that can be further cleaved subsequently. It is also able to degrade amyloid-beta protein 42. The chain is Presequence protease, mitochondrial from Homo sapiens (Human).